The sequence spans 300 residues: tRNA dimethylallyltransferase (300 aa).

11–18 (GPTAVGKS) contacts ATP. 13 to 18 (TAVGKS) contributes to the substrate binding site. Residues 35–38 (DSIQ) form an interaction with substrate tRNA region.

This sequence belongs to the IPP transferase family. Monomer. The cofactor is Mg(2+).

The enzyme catalyses adenosine(37) in tRNA + dimethylallyl diphosphate = N(6)-dimethylallyladenosine(37) in tRNA + diphosphate. In terms of biological role, catalyzes the transfer of a dimethylallyl group onto the adenine at position 37 in tRNAs that read codons beginning with uridine, leading to the formation of N6-(dimethylallyl)adenosine (i(6)A). In Borrelia duttonii (strain Ly), this protein is tRNA dimethylallyltransferase.